The following is a 433-amino-acid chain: Trigger factor (433 aa).

The PPIase FKBP-type domain occupies 163-248; it reads GNFVVIDFVG…VKEAKVKELP (86 aa).

This sequence belongs to the FKBP-type PPIase family. Tig subfamily.

The protein resides in the cytoplasm. It carries out the reaction [protein]-peptidylproline (omega=180) = [protein]-peptidylproline (omega=0). Functionally, involved in protein export. Acts as a chaperone by maintaining the newly synthesized protein in an open conformation. Functions as a peptidyl-prolyl cis-trans isomerase. This chain is Trigger factor, found in Geobacter metallireducens (strain ATCC 53774 / DSM 7210 / GS-15).